The sequence spans 205 residues: Guanylate kinase (205 aa).

Positions 19–197 constitute a Guanylate kinase-like domain; that stretch reads PKLFTISAPA…AYRVLKSIFI (179 aa). 26 to 33 is a binding site for ATP; the sequence is APAGVGKT.

It belongs to the guanylate kinase family.

It is found in the cytoplasm. It catalyses the reaction GMP + ATP = GDP + ADP. Its function is as follows. Essential for recycling GMP and indirectly, cGMP. This is Guanylate kinase (gmk) from Chlamydia pneumoniae (Chlamydophila pneumoniae).